Reading from the N-terminus, the 341-residue chain is Beta-ketoacyl-[acyl-carrier-protein] synthase III 1 (341 aa).

Catalysis depends on residues C113 and H249. The segment at 250–254 (QANIR) is ACP-binding. The active site involves N279.

The protein belongs to the thiolase-like superfamily. FabH family. Homodimer.

It localises to the cytoplasm. The enzyme catalyses malonyl-[ACP] + acetyl-CoA + H(+) = 3-oxobutanoyl-[ACP] + CO2 + CoA. It participates in lipid metabolism; fatty acid biosynthesis. Functionally, catalyzes the condensation reaction of fatty acid synthesis by the addition to an acyl acceptor of two carbons from malonyl-ACP. Catalyzes the first condensation reaction which initiates fatty acid synthesis and may therefore play a role in governing the total rate of fatty acid production. Possesses both acetoacetyl-ACP synthase and acetyl transacylase activities. Its substrate specificity determines the biosynthesis of branched-chain and/or straight-chain of fatty acids. The chain is Beta-ketoacyl-[acyl-carrier-protein] synthase III 1 from Deinococcus radiodurans (strain ATCC 13939 / DSM 20539 / JCM 16871 / CCUG 27074 / LMG 4051 / NBRC 15346 / NCIMB 9279 / VKM B-1422 / R1).